A 186-amino-acid chain; its full sequence is Hydra actinoporin-like toxin 6 (186 aa).

Positions 1–21 are cleaved as a signal peptide; the sequence is MLVYVCLVVILIQLPFGAAGG. A Cell attachment site motif is present at residues 158–160; it reads RAG.

It belongs to the actinoporin family. HALT subfamily. As to quaternary structure, octamer or nonamer in membranes. Monomer in the soluble state. In vitro, interacts with folate receptor alpha (of target organism). As to expression, expressed female germline during oogenesis.

The protein localises to the nematocyst. The protein resides in the secreted. It is found in the target cell membrane. Its function is as follows. Pore-forming protein that forms hydrophilic pores and causes cytolysis. Compared to equinatoxin-2 (AC P61914), it reveals lower cytolysis activity (5-12-fold difference, tested on erythrocytes), a larger pore size (probably 2-3 nm) and different affinity to membrane lipids (100-fold lower affinity to sphingomyelin). Binds to sulfatides. Shows cytolytic activity on HeLa cells, with a different potency than its paralogs (from most potent to less potent: HALT-4&gt;HALT-6~HALT-1&gt;HALT-3&gt;HALT-7&gt;HALT-2). Pore formation is a multi-step process that involves specific recognition of membrane lipid by a protein aromatic residues rich region, firm binding to the membrane (mainly driven by hydrophobic interactions) accompanied by the transfer of the N-terminal region to the lipid-water interface and finally pore formation after oligomerization of monomers. In vitro, binds to the folate receptor alpha (FOLR1), a GPI-anchored membrane protein that plays a major role in the uptake of folate/folic acid into cells via endocytosis, suggesting a possible involvement of this receptor in the mechanism of HALT-1-induced cell lysis. In vivo, does not cause visible paralysis in larvae of the blowfly Sarcophaga faculata, the most common arthropod prey of Hydra. This is Hydra actinoporin-like toxin 6 from Hydra vulgaris (Hydra).